The following is a 293-amino-acid chain: Probable xyloglucan endotransglucosylase/hydrolase protein 5 (293 aa).

The N-terminal stretch at 1–21 (MGRLSSTLCLTFLILATVAFG) is a signal peptide. The GH16 domain occupies 23–220 (PPKKSINVPF…WEKAPFVASY (198 aa)). Catalysis depends on E106, which acts as the Nucleophile. E110 (proton donor) is an active-site residue. Residue E110 participates in xyloglucan binding. Residue N114 is glycosylated (N-linked (GlcNAc...) asparagine). Residues 123-125 (QTN), 133-135 (NRE), 199-200 (DW), and G204 each bind xyloglucan. 2 disulfide bridges follow: C228/C237 and C274/C287. R279 is a binding site for xyloglucan.

Belongs to the glycosyl hydrolase 16 family. XTH group 1 subfamily. Post-translationally, contains at least one intrachain disulfide bond essential for its enzymatic activity. Root specific.

The protein resides in the secreted. It is found in the cell wall. It localises to the extracellular space. Its subcellular location is the apoplast. It catalyses the reaction breaks a beta-(1-&gt;4) bond in the backbone of a xyloglucan and transfers the xyloglucanyl segment on to O-4 of the non-reducing terminal glucose residue of an acceptor, which can be a xyloglucan or an oligosaccharide of xyloglucan.. Catalyzes xyloglucan endohydrolysis (XEH) and/or endotransglycosylation (XET). Cleaves and religates xyloglucan polymers, an essential constituent of the primary cell wall, and thereby participates in cell wall construction of growing tissues. This is Probable xyloglucan endotransglucosylase/hydrolase protein 5 (XTH5) from Arabidopsis thaliana (Mouse-ear cress).